The following is a 193-amino-acid chain: Ion-translocating oxidoreductase complex subunit A (193 aa).

6 helical membrane passes run 5–25 (LLILVSTILVNNFVLVQFLGL), 38–58 (AMGMSLATTFVLTLSSLCSYL), 65–85 (APLGMEFLKTITFILVIAVVV), 102–122 (VLGIFLPLITTNCAVLGVALL), 134–154 (ILYGFGAAVGFSLVLTLFSAM), and 171–191 (AIGMITAGLMSLAFLGFTGLV).

It belongs to the NqrDE/RnfAE family. As to quaternary structure, the complex is composed of six subunits: RnfA, RnfB, RnfC, RnfD, RnfE and RnfG.

The protein localises to the cell inner membrane. Part of a membrane-bound complex that couples electron transfer with translocation of ions across the membrane. The sequence is that of Ion-translocating oxidoreductase complex subunit A from Hahella chejuensis (strain KCTC 2396).